Consider the following 287-residue polypeptide: tRNA pseudouridine synthase B (287 aa).

Catalysis depends on Asp-37, which acts as the Nucleophile.

This sequence belongs to the pseudouridine synthase TruB family. Type 1 subfamily.

It carries out the reaction uridine(55) in tRNA = pseudouridine(55) in tRNA. Its function is as follows. Responsible for synthesis of pseudouridine from uracil-55 in the psi GC loop of transfer RNAs. This is tRNA pseudouridine synthase B from Caldicellulosiruptor saccharolyticus (strain ATCC 43494 / DSM 8903 / Tp8T 6331).